The primary structure comprises 197 residues: MRFDAADAHWRETPRPGASGAQKDWLTRGGSLTAHLARLGRVTVRVTREAVATPWADERGALACAPRAPVWVREVVLAVDGTPFVAAHSIAPLAASKGVWQAMRRLRTRPLAELLYSDPEVTRSALVSRRVIAGHPLFALASHALSPGHATPHAFAARRSVFERRGTPLMVTECMLPALWRHLDAHGERRARDFEGA.

Basic and acidic residues predominate over residues 1–14 (MRFDAADAHWRETP). The segment at 1–25 (MRFDAADAHWRETPRPGASGAQKDW) is disordered. Substrate contacts are provided by arginine 73, leucine 111, and glutamate 173.

It belongs to the UbiC family.

It is found in the cytoplasm. It catalyses the reaction chorismate = 4-hydroxybenzoate + pyruvate. The protein operates within cofactor biosynthesis; ubiquinone biosynthesis. In terms of biological role, removes the pyruvyl group from chorismate, with concomitant aromatization of the ring, to provide 4-hydroxybenzoate (4HB) for the ubiquinone pathway. The chain is Probable chorismate pyruvate-lyase from Burkholderia thailandensis (strain ATCC 700388 / DSM 13276 / CCUG 48851 / CIP 106301 / E264).